Here is a 239-residue protein sequence, read N- to C-terminus: MLDFINHDKDPETGKVMRKVRSFVLREGRLTAGQRNALDTLWPRFGLERDQGMLNPESVFGRDAPRVLEIGYGMGQSLAQMAAADPDKDFIGIEVHRPGVGALLMEIEQQGLSNLRSYCDDAVEILELCIPDNSLARVQLYFPDPWHKKKHHKRRIVQPAWVALVQRKLQPGGILHMATDWENYAEHMMEVMDAAAGFSNLAGPSAFSPRPSWRPETKFERRGEKLGHGVWDLLFEKRA.

Residues glutamate 69, glutamate 94, aspartate 121, and aspartate 144 each contribute to the S-adenosyl-L-methionine site. Aspartate 144 is a catalytic residue. Residues lysine 148, aspartate 180, and 217–220 (TKFE) contribute to the substrate site.

Belongs to the class I-like SAM-binding methyltransferase superfamily. TrmB family.

The enzyme catalyses guanosine(46) in tRNA + S-adenosyl-L-methionine = N(7)-methylguanosine(46) in tRNA + S-adenosyl-L-homocysteine. It functions in the pathway tRNA modification; N(7)-methylguanine-tRNA biosynthesis. Its function is as follows. Catalyzes the formation of N(7)-methylguanine at position 46 (m7G46) in tRNA. In Alcanivorax borkumensis (strain ATCC 700651 / DSM 11573 / NCIMB 13689 / SK2), this protein is tRNA (guanine-N(7)-)-methyltransferase.